A 441-amino-acid chain; its full sequence is MLRSLHSSSSSDTDNNSGGCKNNGGGGGEAAAAVEGGGDQRAVAAAAPSTRDLLLACADLLQRGDLPAARRAAEIVLAAAASPRGDAADRLAYHFARALALRVDAKAGHGHVVVGGGAARPASSGAYLAFNQIAPFLRFAHLTANQAILEAVDGARRVHILDLDAVHGVQWPPLLQAIAERADPALGPPEVRVTGAGADRDTLLRTGNRLRAFARSIHLPFHFTPLLLSCATTAPHHVAGTSTGAAAAASTAAAATGLEFHPDETLAVNCVMFLHNLAGHDELAAFLKWVKAMSPAVVTIAEREAGGGGGGGDHIDDLPRRVGVAMDHYSAVFEALEATVPPGSRERLAVEQEVLGREIEAAVGPSGGRWWRGIERWGGAARAAGFAARPLSAFAVSQARLLLRLHYPSEGYLVQEARGACFLGWQTRPLLSVSAWQPSSS.

The segment at 1-33 is disordered; sequence MLRSLHSSSSSDTDNNSGGCKNNGGGGGEAAAA. A compositionally biased stretch (low complexity) spans 7–20; the sequence is SSSSSDTDNNSGGC. Over residues 21 to 33 the composition is skewed to gly residues; it reads KNNGGGGGEAAAA. The GRAS domain occupies 41 to 437; sequence RAVAAAAPST…RPLLSVSAWQ (397 aa). Residues 48–126 form a leucine repeat I (LRI) region; the sequence is PSTRDLLLAC…GAARPASSGA (79 aa). The VHIID stretch occupies residues 127–195; sequence YLAFNQIAPF…LGPPEVRVTG (69 aa). A VHIID motif is present at residues 158-162; that stretch reads VHILD. Positions 205-256 are leucine repeat II (LRII); the sequence is RTGNRLRAFARSIHLPFHFTPLLLSCATTAPHHVAGTSTGAAAAASTAAAAT. The segment at 266-361 is PFYRE; sequence LAVNCVMFLH…QEVLGREIEA (96 aa). The segment at 364-437 is SAW; that stretch reads GPSGGRWWRG…RPLLSVSAWQ (74 aa).

This sequence belongs to the GRAS family. In terms of tissue distribution, expressed in a small number of epidermal or subepidermal cells at the leaf axils, in axillary meristems and the entire tiller buds. Undetected in the shoot apical meristem.

The protein resides in the nucleus. Functionally, putative transcription regulator that controls rice tillering by initiating axillary buds and promoting their outgrowth. Rice tiller is a specialized grain-bearing branch that is formed on the unelongated basal internode and grows independently of the mother stem (culm) by means of its own adventitious roots. This Oryza sativa subsp. japonica (Rice) protein is Protein MONOCULM 1.